The sequence spans 276 residues: Bis(5'-nucleosyl)-tetraphosphatase, symmetrical (276 aa).

Belongs to the Ap4A hydrolase family.

It carries out the reaction P(1),P(4)-bis(5'-adenosyl) tetraphosphate + H2O = 2 ADP + 2 H(+). Its function is as follows. Hydrolyzes diadenosine 5',5'''-P1,P4-tetraphosphate to yield ADP. In Legionella pneumophila (strain Corby), this protein is Bis(5'-nucleosyl)-tetraphosphatase, symmetrical.